The sequence spans 409 residues: TNF receptor-associated factor 1 (409 aa).

At S139 the chain carries Phosphoserine. A coiled-coil region spans residues 167-256; the sequence is EELALQHLVK…EHSLRLMEEA (90 aa). Glycyl lysine isopeptide (Lys-Gly) (interchain with G-Cter in ubiquitin) cross-links involve residues K178 and K186. Residues 259-405 form the MATH domain; the sequence is DGTFLWKITN…DDTMFLKCIV (147 aa).

As to quaternary structure, homotrimer. Heterotrimer with TRAF2. Interacts with TNFRSF1A/TNFR1, TNFRSF1B/TNFR2, TNFRSF4, TNFRSF5/CD40, TNFRSF8/CD30, TNFRSF9/CD137, TNFRSF11A/RANK, TNFRSF13C, TNFRSF18/AITR, TNFRSF17/BCMA, TNFRSF19/TROY, TNFRSF19L/RELT, XEDAR, EDAR, Epstein-Barr virus BNFL1/LMP-1, TANK/ITRAF, TRAIP and RIPK2. Interacts with BIRC2 and BIRC3 N-terminus; a single BIRC2 or BIRC3 molecule interacts with a heterotrimer formed by TRAF1 and TRAF2. Interacts with MAP3K14. Interacts with NFATC2IP, TRAFD1 and with HIVEP3. Interacts with GPS2. Polyubiquitinated by BIRC2 and/or BIRC3, leading to its subsequent proteasomal degradation. Ubiquitinated by the SCF(FBXL2) complex, leading to its degradation by the proteasome.

It is found in the cytoplasm. Its function is as follows. Adapter molecule that regulates the activation of NF-kappa-B and JNK. Plays a role in the regulation of cell survival and apoptosis. The heterotrimer formed by TRAF1 and TRAF2 is part of a E3 ubiquitin-protein ligase complex that promotes ubiquitination of target proteins, such as MAP3K14. The TRAF1/TRAF2 complex recruits the antiapoptotic E3 protein-ubiquitin ligases BIRC2 and BIRC3 to TNFRSF1B/TNFR2. This is TNF receptor-associated factor 1 (Traf1) from Mus musculus (Mouse).